The sequence spans 160 residues: MRAVIQRVREASVTVAGEVVGAIGNGLLILLGVCHTDTAEDVELLAEKIAQLRIFSDHEGKFNLSLLDVGGAALVVSQFTLYADTRKGRRPSFTAAARPEIAAPLVDAFAAALRARNIPVATGVFGAMMQVALINDGPVTLVIDSAELRLPRRAGSRVDS.

The Gly-cisPro motif, important for rejection of L-amino acids motif lies at 137–138 (GP).

Belongs to the DTD family. Homodimer.

The protein localises to the cytoplasm. It catalyses the reaction glycyl-tRNA(Ala) + H2O = tRNA(Ala) + glycine + H(+). It carries out the reaction a D-aminoacyl-tRNA + H2O = a tRNA + a D-alpha-amino acid + H(+). Its function is as follows. An aminoacyl-tRNA editing enzyme that deacylates mischarged D-aminoacyl-tRNAs. Also deacylates mischarged glycyl-tRNA(Ala), protecting cells against glycine mischarging by AlaRS. Acts via tRNA-based rather than protein-based catalysis; rejects L-amino acids rather than detecting D-amino acids in the active site. By recycling D-aminoacyl-tRNA to D-amino acids and free tRNA molecules, this enzyme counteracts the toxicity associated with the formation of D-aminoacyl-tRNA entities in vivo and helps enforce protein L-homochirality. The protein is D-aminoacyl-tRNA deacylase of Chloroflexus aurantiacus (strain ATCC 29364 / DSM 637 / Y-400-fl).